The following is a 381-amino-acid chain: GDP-mannose transporter (381 aa).

The Cytoplasmic portion of the chain corresponds to 1-44; it reads MAEGKKTDDYTIQMDSIDQGNKSFEAPPPPQPRSPPSGSLSNNP. The tract at residues 19–41 is disordered; that stretch reads QGNKSFEAPPPPQPRSPPSGSLS. The span at 26 to 35 shows a compositional bias: pro residues; that stretch reads APPPPQPRSP. The helical transmembrane segment at 45 to 65 threads the bilayer; that stretch reads ILPVLAYCGSSILMTVMNKYV. The Lumenal portion of the chain corresponds to 66–70; the sequence is LSGTD. Residues 71 to 91 traverse the membrane as a helical segment; that stretch reads FNLNFFLLCIQSLVCIIAIQT. Residues 92–109 are Cytoplasmic-facing; sequence CKSCGLITYRDFSADEAR. The chain crosses the membrane as a helical span at residues 110 to 126; the sequence is KWFPITLLLIGMIYTGS. Topologically, residues 127–133 are lumenal; it reads KALQFLS. A helical transmembrane segment spans residues 134 to 150; sequence IPVYTIFKNLTIILIAY. At 151-159 the chain is on the cytoplasmic side; sequence GEVLWFGGS. Residues 160–181 form a helical membrane-spanning segment; it reads VTGLTLFSFGLMVLSSIIAAWA. At 182–199 the chain is on the lumenal side; the sequence is DIKHAVESNGDATAKVST. The chain crosses the membrane as a helical span at residues 200 to 220; the sequence is LNAGYIWMLVNCLCTSSYVLG. Residues 221–234 are Cytoplasmic-facing; it reads MRKRIKLTNFKDFD. Residues 235 to 255 form a helical membrane-spanning segment; sequence TMFYNNLLSIPVLIVLSAFLE. Residues 256 to 273 lie on the Lumenal side of the membrane; that stretch reads DWSSTNVNRNFPPMDRNS. The helical transmembrane segment at 274-294 threads the bilayer; sequence IVFAMILSGLSSVFISYTSAW. At 295–302 the chain is on the cytoplasmic side; it reads CVRVTSST. Residues 303–323 form a helical membrane-spanning segment; that stretch reads TYSMVGALNKLPIAISGLIFF. Topologically, residues 324 to 326 are lumenal; the sequence is DAP. The chain crosses the membrane as a helical span at residues 327-347; that stretch reads VTFPSVSAIVVGFVSGIVYAV. The Cytoplasmic segment spans residues 348-381; sequence AKIKQNAKPRTGVLPTANPPVSASSQSMRDSLRS. Positions 358-381 are disordered; the sequence is TGVLPTANPPVSASSQSMRDSLRS. Over residues 366–381 the composition is skewed to polar residues; it reads PPVSASSQSMRDSLRS.

The protein belongs to the TPT transporter family. SLC35D subfamily. Homooligomer.

The protein resides in the golgi apparatus membrane. It localises to the cytoplasmic vesicle membrane. The protein localises to the endoplasmic reticulum membrane. In terms of biological role, involved in the import of GDP-mannose from the cytoplasm into the Golgi lumen. The sequence is that of GDP-mannose transporter (gmt1) from Aspergillus niger (strain ATCC MYA-4892 / CBS 513.88 / FGSC A1513).